A 121-amino-acid chain; its full sequence is Alpha-endosulfine (121 aa).

The disordered stretch occupies residues 1-53 (MSQKQEEENPAEETGEEKQDTQEKEGILPEKAEEAKLKAKYPSLGQKPGGSDF). Ser-2 is modified (N-acetylserine). A Phosphoserine modification is found at Ser-2. The segment covering 16–37 (EEKQDTQEKEGILPEKAEEAKL) has biased composition (basic and acidic residues). Residue Thr-21 is modified to Phosphothreonine. Ser-43 carries the phosphoserine modification. Ser-67 carries the phosphoserine; by GWL modification. The tract at residues 79-121 (NKQLPSAGPDKNLVTGDHIPTPQDLPQRKSSLVTSKLAGGQVE) is disordered. Ser-109 is modified (phosphoserine; by PKA).

Belongs to the endosulfine family. As to quaternary structure, interacts (when phosphorylated at Ser-67) with PPP2R2D. Interacts with ABCC8. Interacts with SNCA; interaction is disrupted when phosphorylated at Ser-109. Post-translationally, phosphorylation at Ser-67 by GWL during mitosis is essential for interaction with PPP2R2D (PR55-delta) and subsequent inactivation of PP2A. Phosphorylated by PKA.

Its subcellular location is the cytoplasm. Functionally, protein phosphatase inhibitor that specifically inhibits protein phosphatase 2A (PP2A) during mitosis. When phosphorylated at Ser-67 during mitosis, specifically interacts with PPP2R2D (PR55-delta) and inhibits its activity, leading to inactivation of PP2A, an essential condition to keep cyclin-B1-CDK1 activity high during M phase. Also acts as a stimulator of insulin secretion by interacting with sulfonylurea receptor (ABCC8), thereby preventing sulfonylurea from binding to its receptor and reducing K(ATP) channel currents. This chain is Alpha-endosulfine (ENSA), found in Bos taurus (Bovine).